Consider the following 49-residue polypeptide: Heme exporter protein C (49 aa).

Belongs to the CcmC/CycZ/HelC family.

Its subcellular location is the cell inner membrane. In terms of biological role, required for the export of heme to the periplasm for the biogenesis of c-type cytochromes. The chain is Heme exporter protein C from Rhizobium leguminosarum bv. viciae.